A 681-amino-acid chain; its full sequence is Cobalamin-dependent radical SAM methyltransferase TokK (681 aa).

Positions 1–144 (MSAELASRGR…ATRLSDHPDY (144 aa)) constitute a B12-binding domain. The cob(II)alamin site is built by Asn-18, Ser-72, Tyr-74, Val-75, His-103, Gly-126, and Glu-127. One can recognise a Radical SAM core domain in the interval 192–417 (RGLRFYALWE…RMYVERPGTP (226 aa)). [4Fe-4S] cluster-binding residues include Cys-206 and Cys-210. A 5'-deoxyadenosine-binding site is contributed by Phe-212. Cys-213 contributes to the [4Fe-4S] cluster binding site. Positions 214 and 249 each coordinate cob(II)alamin. 3 residues coordinate 5'-deoxyadenosine: Gln-312, Glu-349, and Gly-384.

The protein belongs to the methyltransferase superfamily. The cofactor is [4Fe-4S] cluster. Requires cob(II)alamin as cofactor.

It functions in the pathway antibiotic biosynthesis. Methyltransferase involved in the biosynthesis of the beta-lactam carbapenem antibiotic asparenomycin. Catalyzes three consecutive S-adenosyl-L-methionine-dependent methylations to build out the C6-isopropyl side chain in a stereocontrolled manner. This chain is Cobalamin-dependent radical SAM methyltransferase TokK, found in Streptomyces tokunonensis.